The chain runs to 650 residues: Growth hormone receptor (650 aa).

The N-terminal stretch at 1 to 24 (MDLCQVFLTLALAVTSSTFSGSEA) is a signal peptide. The Extracellular segment spans residues 25–273 (TPATLGKASP…ILEACEEDIQ (249 aa)). 2 cysteine pairs are disulfide-bonded: Cys56–Cys66 and Cys109–Cys120. N-linked (GlcNAc...) asparagine glycosylation is present at Asn123. Cys134 and Cys148 are joined by a disulfide. One can recognise a Fibronectin type-III domain in the interval 159-262 (PPIGLNWTLL…EVLRVIFPQT (104 aa)). Asn164, Asn169, and Asn208 each carry an N-linked (GlcNAc...) asparagine glycan. Positions 248–252 (YSEFS) match the WSXWS motif motif. A helical membrane pass occupies residues 274 to 297 (FPWFLIIIFGIFGVAVMLFVVIFS). Residues 298–650 (KQQRIKMLIL…STDQLNKIMQ (353 aa)) lie on the Cytoplasmic side of the membrane. The tract at residues 303-390 (KMLILPPVPV…HEKSAGILGA (88 aa)) is required for JAK2 binding. The Box 1 motif signature appears at 306–314 (ILPPVPVPK). The UbE motif motif lies at 349–358 (DSWVEFIELD). Position 350 is a phosphoserine (Ser350). The disordered stretch occupies residues 466–486 (KPQPLLSSETEATHQLASTPM). The span at 470–486 (LLSSETEATHQLASTPM) shows a compositional bias: polar residues. Phosphotyrosine occurs at positions 498 and 606.

Belongs to the type I cytokine receptor family. Type 1 subfamily. On growth hormone (GH) binding, forms homodimers and binds JAK2 via a box 1-containing domain. In terms of processing, the soluble form (GHBP) is produced by phorbol ester-promoted proteolytic cleavage at the cell surface (shedding) by ADAM17/TACE. Shedding is inhibited by growth hormone (GH) binding to the receptor probably due to a conformational change in GHR rendering the receptor inaccessible to ADAM17. On GH binding, phosphorylated on tyrosine residues in the cytoplasmic domain by JAK2. Post-translationally, ubiquitinated by the ECS(SOCS2) complex following ligand-binding and phosphorylation by JAK2, leading to its degradation by the proteasome. Regulation by the ECS(SOCS2) complex acts as a negative feedback loop of growth hormone receptor signaling. Ubiquitination is not sufficient for GHR internalization. As to expression, expressed in all tissues tested including, liver, heart, adipose tissue, mammary gland, testes, ovary, brain, kidney and muscle. Highest levels in liver.

The protein localises to the cell membrane. The protein resides in the secreted. In terms of biological role, receptor for pituitary gland growth hormone (GH1) involved in regulating postnatal body growth. On ligand binding, couples to the JAK2/STAT5 pathway. Functionally, the soluble form (GHBP) acts as a reservoir of growth hormone in plasma and may be a modulator/inhibitor of GH signaling. The chain is Growth hormone receptor (Ghr) from Mus musculus (Mouse).